The primary structure comprises 173 residues: Interferon gamma (173 aa).

The N-terminal stretch at 1 to 22 (MNATHCILALQLCLLAISGCSS) is a signal peptide. Residue Q23 is modified to Pyrrolidone carboxylic acid. N38 and N105 each carry an N-linked (GlcNAc...) asparagine glycan.

It belongs to the type II (or gamma) interferon family. Homodimer. Interacts with IFNGR1 (via extracellular domain); this interaction promotes IFNGR1 dimerization. In terms of tissue distribution, released primarily from activated T lymphocytes.

Its subcellular location is the secreted. Functionally, type II interferon produced by immune cells such as T-cells and NK cells that plays crucial roles in antimicrobial, antiviral, and antitumor responses by activating effector immune cells and enhancing antigen presentation. Primarily signals through the JAK-STAT pathway after interaction with its receptor IFNGR1 to affect gene regulation. Upon IFNG binding, IFNGR1 intracellular domain opens out to allow association of downstream signaling components JAK2, JAK1 and STAT1, leading to STAT1 activation, nuclear translocation and transcription of IFNG-regulated genes. Many of the induced genes are transcription factors such as IRF1 that are able to further drive regulation of a next wave of transcription. Plays a role in class I antigen presentation pathway by inducing a replacement of catalytic proteasome subunits with immunoproteasome subunits. In turn, increases the quantity, quality, and repertoire of peptides for class I MHC loading. Increases the efficiency of peptide generation also by inducing the expression of activator PA28 that associates with the proteasome and alters its proteolytic cleavage preference. Up-regulates as well MHC II complexes on the cell surface by promoting expression of several key molecules such as cathepsins B/CTSB, H/CTSH, and L/CTSL. Participates in the regulation of hematopoietic stem cells during development and under homeostatic conditions by affecting their development, quiescence, and differentiation. In Meriones unguiculatus (Mongolian jird), this protein is Interferon gamma (IFNG).